Here is a 906-residue protein sequence, read N- to C-terminus: Pre-mRNA-splicing factor prp1 (906 aa).

2 disordered regions span residues 50 to 129 and 142 to 164; these read IEQR…VSSQ and DEDW…KQPR. Residues 108–124 show a composition bias toward basic and acidic residues; it reads REKQEQLQKEKYEKENP. Position 235 is a phosphoserine (Ser-235). 11 HAT repeats span residues 258–290, 322–353, 354–384, 385–416, 524–556, 558–590, 592–624, 693–725, 726–758, 760–792, and 824–856; these read GDIR…LEEV, HPAA…KLEN, QAQH…NLEE, EVDN…LETY, KCID…LEKL, GTTE…ERKN, NDIA…IEFV, EQIE…LEEK, QSVI…MELR, GNIS…LEPR, and KKAD…YSLE.

Interacts with brr2 and spp42.

Its subcellular location is the nucleus. Its function is as follows. Involved in pre-mRNA splicing. Interacts with prp6 and prp13. May also be involved in the regulation of the G0-G1/G2 transition. Required for pre-spliceosome formation, which is the first step of pre-mRNA splicing. This protein is associated with snRNP U5. Has a role in branch site-3' splice site selection. Associates with the branch site-3' splice 3'-exon region. The chain is Pre-mRNA-splicing factor prp1 (prp1) from Schizosaccharomyces pombe (strain 972 / ATCC 24843) (Fission yeast).